Reading from the N-terminus, the 62-residue chain is Protein YmcF (62 aa).

This sequence belongs to the YmcF/YnqF peptide family.

This Escherichia coli (strain K12) protein is Protein YmcF.